The primary structure comprises 603 residues: Laccase 1 (603 aa).

Residues 1–20 (MSRFARLLLIVALFFTNAWA) form the signal peptide. Plastocyanin-like domains are found at residues 66 to 108 (QRPI…IHIR) and 159 to 349 (LVVS…MRIP). Residues His90 and His92 each coordinate Cu cation. Residues Asn246, Asn269, Asn434, and Asn474 are each glycosylated (N-linked (GlcNAc...) asparagine). Residues 460–588 (TRDTENDGLV…GGMGIAILDG (129 aa)) form the Plastocyanin-like 3 domain. Cu cation contacts are provided by His496, His499, and His501. Asn516 is a glycosylation site (N-linked (GlcNAc...) asparagine). Residues His570, Cys571, His572, and His576 each coordinate Cu cation.

This sequence belongs to the multicopper oxidase family. The cofactor is Cu cation.

The protein localises to the cell surface. Its pathway is pigment biosynthesis. Functionally, laccase; part of the Pks1 gene cluster that mediates the biosynthesis of an anthraquinone derivative pigment that contributes to conidial pigmentation that provides protection from UV radiation, heat and cold stress. The polyketide synthase Pks1 produces 1-acetyl-2,4,6,8-tetrahydroxy-9,10-anthraquinone though condensation of acetyl-CoA with malonyl-CoA. The dehydratase EthD and the laccase Mlac1 further convert the anthraquinone derivative into the final conidial pigment. The sequence is that of Laccase 1 from Metarhizium anisopliae (Entomophthora anisopliae).